The sequence spans 152 residues: Lipoprotein signal peptidase (152 aa).

3 helical membrane-spanning segments follow: residues 5–25 (LFVLSLILLVALDQLSKFWIV), 61–81 (WFFVAITVLVIGYAIYYLATH), and 84–104 (LNIWKQLALLLIISGGIGNFI). Residues aspartate 114 and aspartate 130 contribute to the active site. Residues 125 to 145 (IFNVADSYLTVGVILLVICLW) form a helical membrane-spanning segment.

It belongs to the peptidase A8 family.

The protein resides in the cell membrane. The enzyme catalyses Release of signal peptides from bacterial membrane prolipoproteins. Hydrolyzes -Xaa-Yaa-Zaa-|-(S,diacylglyceryl)Cys-, in which Xaa is hydrophobic (preferably Leu), and Yaa (Ala or Ser) and Zaa (Gly or Ala) have small, neutral side chains.. The protein operates within protein modification; lipoprotein biosynthesis (signal peptide cleavage). Its function is as follows. This protein specifically catalyzes the removal of signal peptides from prolipoproteins. In Streptococcus pyogenes serotype M6 (strain ATCC BAA-946 / MGAS10394), this protein is Lipoprotein signal peptidase.